The chain runs to 509 residues: MRLHEILKHLCEPAHMPPVNPEIAGVVYDSRAVTPGALFVAYRGFHTDGHAYIPQALERGAAAVVYEDPAWDGRVPVPALRVPNARVALAPLAAAFYGHPGRRMRIVGVTGTDGKTTTTFLTSVALEAGGAITGLMGTVDFKIGERMWTNDSRQSTPEAPEVQALLRDMAEAGCSYAVIEATSHALSARWNRLAGSAFDIAVFTNVTQEHLDFHGTVEQYRRDKARLFEMLAEFNDAAAPFKQRKIAVVNADDPHHRMFLDAAPVSAERLTYAVHAHADVRAEDVRSTRDGLRFRVTTPWGAADARLRLTGDFNVWNALAALTVACAEGVPLERCLAALERVPGVRGRMERIEAGQPFTVLVDYAHTPGAFEKLFRIVRPLTEGQVIAVFGSAGERDRAKRPLQGEIAGRFCDLVIVTDEDPRLEDRAAIIAEIAAGAEAVGKRIGETCLCIPDRALAIRTAFAYARPGDIVLLLGKGHEGSIIYGTTPVPWDEAAEARRALAELGYGG.

Ser-30 lines the UDP-N-acetyl-alpha-D-muramoyl-L-alanyl-D-glutamate pocket. ATP is bound at residue 111–117 (GTDGKTT). UDP-N-acetyl-alpha-D-muramoyl-L-alanyl-D-glutamate-binding positions include 155–156 (ST), Thr-182, and Arg-192. Lys-224 is subject to N6-carboxylysine.

This sequence belongs to the MurCDEF family. MurE subfamily. Carboxylation is probably crucial for Mg(2+) binding and, consequently, for the gamma-phosphate positioning of ATP.

It localises to the cytoplasm. The protein operates within cell wall biogenesis; peptidoglycan biosynthesis. In terms of biological role, catalyzes the addition of an amino acid to the nucleotide precursor UDP-N-acetylmuramoyl-L-alanyl-D-glutamate (UMAG) in the biosynthesis of bacterial cell-wall peptidoglycan. The polypeptide is UDP-N-acetylmuramyl-tripeptide synthetase (Roseiflexus sp. (strain RS-1)).